A 448-amino-acid chain; its full sequence is Tubulin alpha-4A chain (448 aa).

The short motif at 1–4 is the MREC motif element; it reads MREC. GTP is bound at residue glutamine 11. The residue at position 40 (lysine 40) is an N6-acetyllysine. Serine 48 carries the post-translational modification Phosphoserine. Glutamate 71 contributes to the GTP binding site. Position 71 (glutamate 71) interacts with Mg(2+). Tyrosine 83 is modified (3'-nitrotyrosine). Residues serine 140, glycine 144, threonine 145, threonine 179, asparagine 206, and asparagine 228 each contribute to the GTP site. Residue glutamate 254 is part of the active site. Residue tyrosine 432 is modified to Phosphotyrosine. At serine 439 the chain carries Phosphoserine.

It belongs to the tubulin family. As to quaternary structure, dimer of alpha and beta chains. A typical microtubule is a hollow water-filled tube with an outer diameter of 25 nm and an inner diameter of 15 nM. Alpha-beta heterodimers associate head-to-tail to form protofilaments running lengthwise along the microtubule wall with the beta-tubulin subunit facing the microtubule plus end conferring a structural polarity. Microtubules usually have 13 protofilaments but different protofilament numbers can be found in some organisms and specialized cells. Interacts with CFAP157. Mg(2+) is required as a cofactor. Post-translationally, some glutamate residues at the C-terminus are polyglycylated, resulting in polyglycine chains on the gamma-carboxyl group. Glycylation is mainly limited to tubulin incorporated into axonemes (cilia and flagella) whereas glutamylation is prevalent in neuronal cells, centrioles, axonemes, and the mitotic spindle. Both modifications can coexist on the same protein on adjacent residues, and lowering polyglycylation levels increases polyglutamylation, and reciprocally. Cilia and flagella glycylation is required for their stability and maintenance. Flagella glycylation controls sperm motility. Some glutamate residues at the C-terminus are polyglutamylated, resulting in polyglutamate chains on the gamma-carboxyl group. Polyglutamylation plays a key role in microtubule severing by spastin (SPAST). SPAST preferentially recognizes and acts on microtubules decorated with short polyglutamate tails: severing activity by SPAST increases as the number of glutamates per tubulin rises from one to eight, but decreases beyond this glutamylation threshold. Glutamylation is also involved in cilia motility. In terms of processing, acetylation of alpha chains at Lys-40 is located inside the microtubule lumen. This modification has been correlated with increased microtubule stability, intracellular transport and ciliary assembly. Post-translationally, methylation of alpha chains at Lys-40 is found in mitotic microtubules and is required for normal mitosis and cytokinesis contributing to genomic stability. Although this tubulin does not encode a C-terminal tyrosine, a C-terminal tyrosine can be added post-translationally by the tubulin tyrosine ligase (TTL). It can then undergo a detyrosination cycle by the tubulin tyrosine carboxypeptidase (MATCAP1/KIAA0895L).

The protein localises to the cytoplasm. The protein resides in the cytoskeleton. It catalyses the reaction GTP + H2O = GDP + phosphate + H(+). Tubulin is the major constituent of microtubules, a cylinder consisting of laterally associated linear protofilaments composed of alpha- and beta-tubulin heterodimers. Microtubules grow by the addition of GTP-tubulin dimers to the microtubule end, where a stabilizing cap forms. Below the cap, tubulin dimers are in GDP-bound state, owing to GTPase activity of alpha-tubulin. In Macaca fascicularis (Crab-eating macaque), this protein is Tubulin alpha-4A chain (TUBA4A).